Reading from the N-terminus, the 251-residue chain is Regulator of G-protein signaling 7-binding protein B (251 aa).

Residues 1 to 43 form a disordered region; the sequence is MCSAPNGRKNRPRSAANIFQIGKSSVRDPERRESTESARRAQR. Over residues 25-43 the composition is skewed to basic and acidic residues; the sequence is SVRDPERRESTESARRAQR. S-palmitoyl cysteine attachment occurs at residues Cys-246 and Cys-247.

It belongs to the RGS7BP/RGS9BP family. In terms of processing, palmitoylated. Undergoes rapid palmitoylation turnover. Palmitoylation regulates the cell membrane and nuclear shuttling and the regulation of GPCR signaling. Upon depalmitoylation, it is targeted from the plasma membrane into the nucleus. GPCR signaling inhibits depalmitoylation and promotes localization to the plasma membrane.

The protein localises to the nucleus. It localises to the cytoplasm. The protein resides in the cell membrane. Regulator of G protein-coupled receptor (GPCR) signaling. Regulatory subunit of the R7-Gbeta5 complexes that acts by controlling the subcellular location of the R7-Gbeta5 complexes. When palmitoylated, it targets the R7-Gbeta5 complexes to the plasma membrane, leading to inhibit G protein alpha subunits. When it is unpalmitoylated, the R7-Gbeta5 complexes undergo a nuclear/cytoplasmic shuttling. The sequence is that of Regulator of G-protein signaling 7-binding protein B (rgs7bpb) from Danio rerio (Zebrafish).